A 181-amino-acid chain; its full sequence is ATP synthase subunit delta (181 aa).

The protein belongs to the ATPase delta chain family. In terms of assembly, F-type ATPases have 2 components, F(1) - the catalytic core - and F(0) - the membrane proton channel. F(1) has five subunits: alpha(3), beta(3), gamma(1), delta(1), epsilon(1). CF(0) has four main subunits: a(1), b(1), b'(1) and c(10-14). The alpha and beta chains form an alternating ring which encloses part of the gamma chain. F(1) is attached to F(0) by a central stalk formed by the gamma and epsilon chains, while a peripheral stalk is formed by the delta, b and b' chains.

It localises to the cellular thylakoid membrane. Functionally, f(1)F(0) ATP synthase produces ATP from ADP in the presence of a proton or sodium gradient. F-type ATPases consist of two structural domains, F(1) containing the extramembraneous catalytic core and F(0) containing the membrane proton channel, linked together by a central stalk and a peripheral stalk. During catalysis, ATP synthesis in the catalytic domain of F(1) is coupled via a rotary mechanism of the central stalk subunits to proton translocation. This protein is part of the stalk that links CF(0) to CF(1). It either transmits conformational changes from CF(0) to CF(1) or is implicated in proton conduction. This chain is ATP synthase subunit delta, found in Synechococcus sp. (strain RCC307).